A 146-amino-acid chain; its full sequence is 1,4-dihydroxy-2-naphthoyl-CoA hydrolase (146 aa).

D15 is an active-site residue.

The protein belongs to the 4-hydroxybenzoyl-CoA thioesterase family. DHNA-CoA hydrolase subfamily.

The catalysed reaction is 1,4-dihydroxy-2-naphthoyl-CoA + H2O = 1,4-dihydroxy-2-naphthoate + CoA + H(+). The protein operates within cofactor biosynthesis; phylloquinone biosynthesis. Its pathway is quinol/quinone metabolism; 1,4-dihydroxy-2-naphthoate biosynthesis; 1,4-dihydroxy-2-naphthoate from chorismate: step 7/7. Catalyzes the hydrolysis of 1,4-dihydroxy-2-naphthoyl-CoA (DHNA-CoA) to 1,4-dihydroxy-2-naphthoate (DHNA), a reaction involved in phylloquinone (vitamin K1) biosynthesis. In Picosynechococcus sp. (strain ATCC 27264 / PCC 7002 / PR-6) (Agmenellum quadruplicatum), this protein is 1,4-dihydroxy-2-naphthoyl-CoA hydrolase.